Here is a 291-residue protein sequence, read N- to C-terminus: ATP synthase subunit b 2 (291 aa).

A helical transmembrane segment spans residues 2–22 (LIDGFTVVAQIVNFLILVWLL).

This sequence belongs to the ATPase B chain family. In terms of assembly, F-type ATPases have 2 components, F(1) - the catalytic core - and F(0) - the membrane proton channel. F(1) has five subunits: alpha(3), beta(3), gamma(1), delta(1), epsilon(1). F(0) has three main subunits: a(1), b(2) and c(10-14). The alpha and beta chains form an alternating ring which encloses part of the gamma chain. F(1) is attached to F(0) by a central stalk formed by the gamma and epsilon chains, while a peripheral stalk is formed by the delta and b chains.

Its subcellular location is the cell inner membrane. Functionally, f(1)F(0) ATP synthase produces ATP from ADP in the presence of a proton or sodium gradient. F-type ATPases consist of two structural domains, F(1) containing the extramembraneous catalytic core and F(0) containing the membrane proton channel, linked together by a central stalk and a peripheral stalk. During catalysis, ATP synthesis in the catalytic domain of F(1) is coupled via a rotary mechanism of the central stalk subunits to proton translocation. Its function is as follows. Component of the F(0) channel, it forms part of the peripheral stalk, linking F(1) to F(0). The protein is ATP synthase subunit b 2 of Nitrosospira multiformis (strain ATCC 25196 / NCIMB 11849 / C 71).